The following is a 124-amino-acid chain: Fluoride-specific ion channel FluC (124 aa).

The next 4 helical transmembrane spans lie at 5 to 25 (FLQV…VNIL), 35 to 55 (LGTL…AALL), 63 to 83 (LAPF…AFAL), and 98 to 118 (LGYV…GLTV). Na(+) is bound by residues Gly-73 and Thr-76.

This sequence belongs to the fluoride channel Fluc/FEX (TC 1.A.43) family.

The protein localises to the cell inner membrane. The enzyme catalyses fluoride(in) = fluoride(out). With respect to regulation, na(+) is not transported, but it plays an essential structural role and its presence is essential for fluoride channel function. Fluoride-specific ion channel. Important for reducing fluoride concentration in the cell, thus reducing its toxicity. The sequence is that of Fluoride-specific ion channel FluC from Paracoccus denitrificans (strain Pd 1222).